Here is a 493-residue protein sequence, read N- to C-terminus: Glutamyl-tRNA(Gln) amidotransferase subunit A (493 aa).

Catalysis depends on charge relay system residues K78 and S158. The Acyl-ester intermediate role is filled by S182.

This sequence belongs to the amidase family. GatA subfamily. As to quaternary structure, heterotrimer of A, B and C subunits.

The enzyme catalyses L-glutamyl-tRNA(Gln) + L-glutamine + ATP + H2O = L-glutaminyl-tRNA(Gln) + L-glutamate + ADP + phosphate + H(+). Allows the formation of correctly charged Gln-tRNA(Gln) through the transamidation of misacylated Glu-tRNA(Gln) in organisms which lack glutaminyl-tRNA synthetase. The reaction takes place in the presence of glutamine and ATP through an activated gamma-phospho-Glu-tRNA(Gln). The sequence is that of Glutamyl-tRNA(Gln) amidotransferase subunit A from Methylorubrum populi (strain ATCC BAA-705 / NCIMB 13946 / BJ001) (Methylobacterium populi).